The sequence spans 327 residues: GMP reductase (327 aa).

Cysteine 175 functions as the Thioimidate intermediate in the catalytic mechanism. 204–227 (IIADGGIRTNGDVAKSIRFGATMV) contributes to the NADP(+) binding site.

This sequence belongs to the IMPDH/GMPR family. GuaC type 2 subfamily.

The catalysed reaction is IMP + NH4(+) + NADP(+) = GMP + NADPH + 2 H(+). Catalyzes the irreversible NADPH-dependent deamination of GMP to IMP. It functions in the conversion of nucleobase, nucleoside and nucleotide derivatives of G to A nucleotides, and in maintaining the intracellular balance of A and G nucleotides. This Bacillus anthracis protein is GMP reductase.